A 235-amino-acid polypeptide reads, in one-letter code: Uridylate kinase (235 aa).

9-12 (KLSG) serves as a coordination point for ATP. Gly-51 is a UMP binding site. Residues Gly-52 and Arg-56 each coordinate ATP. UMP contacts are provided by residues Asp-71 and 132-139 (TGNPYFTT). 3 residues coordinate ATP: Thr-159, Tyr-165, and Asp-168.

Belongs to the UMP kinase family. As to quaternary structure, homohexamer.

The protein resides in the cytoplasm. It catalyses the reaction UMP + ATP = UDP + ADP. The protein operates within pyrimidine metabolism; CTP biosynthesis via de novo pathway; UDP from UMP (UMPK route): step 1/1. Its activity is regulated as follows. Inhibited by UTP. Functionally, catalyzes the reversible phosphorylation of UMP to UDP. The protein is Uridylate kinase of Cytophaga hutchinsonii (strain ATCC 33406 / DSM 1761 / CIP 103989 / NBRC 15051 / NCIMB 9469 / D465).